We begin with the raw amino-acid sequence, 227 residues long: Cytochrome c oxidase subunit 2 (227 aa).

Residues M1 to S14 lie on the Mitochondrial intermembrane side of the membrane. Residues P15–T45 form a helical membrane-spanning segment. Residues L46–Q59 lie on the Mitochondrial matrix side of the membrane. Residues E60 to T87 traverse the membrane as a helical segment. Residues D88–L227 lie on the Mitochondrial intermembrane side of the membrane. H161, C196, E198, C200, H204, and M207 together coordinate Cu cation. E198 contributes to the Mg(2+) binding site.

It belongs to the cytochrome c oxidase subunit 2 family. As to quaternary structure, component of the cytochrome c oxidase (complex IV, CIV), a multisubunit enzyme composed of 14 subunits. The complex is composed of a catalytic core of 3 subunits MT-CO1, MT-CO2 and MT-CO3, encoded in the mitochondrial DNA, and 11 supernumerary subunits COX4I, COX5A, COX5B, COX6A, COX6B, COX6C, COX7A, COX7B, COX7C, COX8 and NDUFA4, which are encoded in the nuclear genome. The complex exists as a monomer or a dimer and forms supercomplexes (SCs) in the inner mitochondrial membrane with NADH-ubiquinone oxidoreductase (complex I, CI) and ubiquinol-cytochrome c oxidoreductase (cytochrome b-c1 complex, complex III, CIII), resulting in different assemblies (supercomplex SCI(1)III(2)IV(1) and megacomplex MCI(2)III(2)IV(2)). Found in a complex with TMEM177, COA6, COX18, COX20, SCO1 and SCO2. Interacts with TMEM177 in a COX20-dependent manner. Interacts with COX20. Interacts with COX16. Cu cation is required as a cofactor.

Its subcellular location is the mitochondrion inner membrane. It carries out the reaction 4 Fe(II)-[cytochrome c] + O2 + 8 H(+)(in) = 4 Fe(III)-[cytochrome c] + 2 H2O + 4 H(+)(out). Component of the cytochrome c oxidase, the last enzyme in the mitochondrial electron transport chain which drives oxidative phosphorylation. The respiratory chain contains 3 multisubunit complexes succinate dehydrogenase (complex II, CII), ubiquinol-cytochrome c oxidoreductase (cytochrome b-c1 complex, complex III, CIII) and cytochrome c oxidase (complex IV, CIV), that cooperate to transfer electrons derived from NADH and succinate to molecular oxygen, creating an electrochemical gradient over the inner membrane that drives transmembrane transport and the ATP synthase. Cytochrome c oxidase is the component of the respiratory chain that catalyzes the reduction of oxygen to water. Electrons originating from reduced cytochrome c in the intermembrane space (IMS) are transferred via the dinuclear copper A center (CU(A)) of subunit 2 and heme A of subunit 1 to the active site in subunit 1, a binuclear center (BNC) formed by heme A3 and copper B (CU(B)). The BNC reduces molecular oxygen to 2 water molecules using 4 electrons from cytochrome c in the IMS and 4 protons from the mitochondrial matrix. This chain is Cytochrome c oxidase subunit 2 (MT-CO2), found in Pan troglodytes (Chimpanzee).